The sequence spans 224 residues: Flagellar L-ring protein (224 aa).

The N-terminal stretch at 1–15 (MRSLLFSLTALVLAG) is a signal peptide. Cysteine 16 carries the N-palmitoyl cysteine lipid modification. Cysteine 16 carries S-diacylglycerol cysteine lipidation.

Belongs to the FlgH family. The basal body constitutes a major portion of the flagellar organelle and consists of four rings (L,P,S, and M) mounted on a central rod.

It is found in the cell outer membrane. Its subcellular location is the bacterial flagellum basal body. Its function is as follows. Assembles around the rod to form the L-ring and probably protects the motor/basal body from shearing forces during rotation. This Idiomarina loihiensis (strain ATCC BAA-735 / DSM 15497 / L2-TR) protein is Flagellar L-ring protein.